The following is a 134-amino-acid chain: Small ribosomal subunit protein uS9 (134 aa).

Residues 109–134 (KGDPRRKEPKKFGGRGARARRQKSYR) are disordered. A compositionally biased stretch (basic residues) spans 115–134 (KEPKKFGGRGARARRQKSYR).

Belongs to the universal ribosomal protein uS9 family.

This Methanopyrus kandleri (strain AV19 / DSM 6324 / JCM 9639 / NBRC 100938) protein is Small ribosomal subunit protein uS9.